The primary structure comprises 427 residues: Serine hydroxymethyltransferase (427 aa).

Position 122–124 (122–124 (GHI)) interacts with (6S)-5,6,7,8-tetrahydrofolate. Position 228 is an N6-(pyridoxal phosphate)lysine (Lys-228).

It belongs to the SHMT family. In terms of assembly, homodimer. Pyridoxal 5'-phosphate is required as a cofactor.

It is found in the cytoplasm. Its pathway is amino-acid biosynthesis; glycine biosynthesis; glycine from L-serine: step 1/1. In terms of biological role, catalyzes the reversible interconversion of serine and glycine with a modified folate serving as the one-carbon carrier. Also exhibits a pteridine-independent aldolase activity toward beta-hydroxyamino acids, producing glycine and aldehydes, via a retro-aldol mechanism. The sequence is that of Serine hydroxymethyltransferase from Thermococcus onnurineus (strain NA1).